The primary structure comprises 149 residues: Transcriptional repressor NrdR (149 aa).

A zinc finger spans residues 3–34 (CPFCSATDTKVIDSRLVADGHQVRRRRECVQC). One can recognise an ATP-cone domain in the interval 49–139 (PRVVKQDGSR…VYRAFEDVSE (91 aa)).

It belongs to the NrdR family. It depends on Zn(2+) as a cofactor.

In terms of biological role, negatively regulates transcription of bacterial ribonucleotide reductase nrd genes and operons by binding to NrdR-boxes. The protein is Transcriptional repressor NrdR of Shewanella halifaxensis (strain HAW-EB4).